A 218-amino-acid polypeptide reads, in one-letter code: LexA repressor (218 aa).

A DNA-binding region (H-T-H motif) is located at residues 28-48 (RAEIAAEFGFSSPNAAEEHLR). Residues S136 and K173 each act as for autocatalytic cleavage activity in the active site.

It belongs to the peptidase S24 family. Homodimer.

The enzyme catalyses Hydrolysis of Ala-|-Gly bond in repressor LexA.. Represses a number of genes involved in the response to DNA damage (SOS response), including recA and lexA. In the presence of single-stranded DNA, RecA interacts with LexA causing an autocatalytic cleavage which disrupts the DNA-binding part of LexA, leading to derepression of the SOS regulon and eventually DNA repair. The chain is LexA repressor from Cupriavidus pinatubonensis (strain JMP 134 / LMG 1197) (Cupriavidus necator (strain JMP 134)).